Here is a 428-residue protein sequence, read N- to C-terminus: Beta-1,3-galactosyl-O-glycosyl-glycoprotein beta-1,6-N-acetylglucosaminyltransferase 4 (428 aa).

At 1-12 the chain is on the cytoplasmic side; the sequence is MRRCAVLHRLRC. The chain crosses the membrane as a helical; Signal-anchor for type II membrane protein span at residues 13–30; sequence KFYVFVVSLFVVVKLVYL. Residues 31 to 428 lie on the Lumenal side of the membrane; sequence KISMDNSIYI…QLQQCLRRVS (398 aa). The N-linked (GlcNAc...) asparagine glycan is linked to Asn59. 4 cysteine pairs are disulfide-bonded: Cys60–Cys214, Cys148–Cys369, Cys169–Cys196, and Cys378–Cys410.

This sequence belongs to the glycosyltransferase 14 family.

It localises to the golgi apparatus membrane. It catalyses the reaction a 3-O-[beta-D-galactosyl-(1-&gt;3)-N-acetyl-alpha-D-galactosaminyl]-L-seryl-[protein] + UDP-N-acetyl-alpha-D-glucosamine = 3-O-{beta-D-galactosyl-(1-&gt;3)-[N-acetyl-beta-D-glucosaminyl-(1-&gt;6)]-N-acetyl-alpha-D-galactosaminyl}-L-seryl-[protein] + UDP + H(+). The catalysed reaction is a 3-O-[beta-D-galactosyl-(1-&gt;3)-N-acetyl-alpha-D-galactosaminyl]-L-threonyl-[protein] + UDP-N-acetyl-alpha-D-glucosamine = a 3-O-{beta-D-galactosyl-(1-&gt;3)-[N-acetyl-beta-D-glucosaminyl-(1-&gt;6)]-N-acetyl-alpha-D-galactosaminyl}-L-threonyl-[protein] + UDP + H(+). It participates in protein modification; protein glycosylation. In terms of biological role, glycosyltransferase that mediates core 2 O-glycan branching, an important step in mucin-type biosynthesis. The polypeptide is Beta-1,3-galactosyl-O-glycosyl-glycoprotein beta-1,6-N-acetylglucosaminyltransferase 4 (gcnt4) (Danio rerio (Zebrafish)).